Consider the following 248-residue polypeptide: Triosephosphate isomerase (248 aa).

9–11 (NWK) provides a ligand contact to substrate. Histidine 94 acts as the Electrophile in catalysis. Glutamate 166 acts as the Proton acceptor in catalysis. Substrate-binding positions include glycine 172, serine 212, and 233–234 (GG).

It belongs to the triosephosphate isomerase family. As to quaternary structure, homodimer.

The protein localises to the cytoplasm. The enzyme catalyses D-glyceraldehyde 3-phosphate = dihydroxyacetone phosphate. It functions in the pathway carbohydrate biosynthesis; gluconeogenesis. The protein operates within carbohydrate degradation; glycolysis; D-glyceraldehyde 3-phosphate from glycerone phosphate: step 1/1. Its function is as follows. Involved in the gluconeogenesis. Catalyzes stereospecifically the conversion of dihydroxyacetone phosphate (DHAP) to D-glyceraldehyde-3-phosphate (G3P). This Clostridium acetobutylicum (strain ATCC 824 / DSM 792 / JCM 1419 / IAM 19013 / LMG 5710 / NBRC 13948 / NRRL B-527 / VKM B-1787 / 2291 / W) protein is Triosephosphate isomerase.